The following is a 337-amino-acid chain: Autophagy protein 5 (337 aa).

K128 participates in a covalent cross-link: Glycyl lysine isopeptide (Lys-Gly) (interchain with G-Cter in ATG12). The tract at residues 271 to 290 (RAQTSGEERSIDDTEEADGS) is disordered. The segment covering 276–290 (GEERSIDDTEEADGS) has biased composition (basic and acidic residues).

It belongs to the ATG5 family. As to quaternary structure, conjugated to ATG12. Post-translationally, conjugated to ATG12; which is essential for autophagy. Conjugation with ATG12 involves ATG7 as an E1-like activating enzyme and ATG10 as an E2-like conjugating enzyme. Ubiquitous.

It is found in the cytoplasm. Required for autophagy. Conjugation to ATG12 is essential for plant nutrient recycling. Involved in a negative feedback loop that modulates NPR1-dependent salicylic acid (SA) signaling and limits senescence and immunity-related programmed cell death (PCD) in plants. Involved in complete proteolysis of chloroplast stroma proteins in senescent leaves. Involved in the degradation of damaged peroxisomes. This Arabidopsis thaliana (Mouse-ear cress) protein is Autophagy protein 5.